The sequence spans 92 residues: Small ribosomal subunit protein uS19c (92 aa).

Belongs to the universal ribosomal protein uS19 family.

Its subcellular location is the plastid. The protein localises to the chloroplast. Functionally, protein S19 forms a complex with S13 that binds strongly to the 16S ribosomal RNA. The sequence is that of Small ribosomal subunit protein uS19c from Pinus koraiensis (Korean pine).